The sequence spans 385 residues: Tyrosine--tRNA ligase 1, cytoplasmic (385 aa).

Positions 77–85 (PSGRMHIAQ) match the 'HIGH' region motif. Tyr-200, Gln-204, Asp-207, and Gln-222 together coordinate L-tyrosine. The short motif at 259-263 (KMSKS) is the 'KMSKS' region element. An ATP-binding site is contributed by Lys-262.

This sequence belongs to the class-I aminoacyl-tRNA synthetase family.

The protein localises to the cytoplasm. Its subcellular location is the cytosol. It catalyses the reaction tRNA(Tyr) + L-tyrosine + ATP = L-tyrosyl-tRNA(Tyr) + AMP + diphosphate + H(+). Catalyzes the attachment of tyrosine to tRNA(Tyr) in a two-step reaction: tyrosine is first activated by ATP to form Tyr-AMP and then transferred to the acceptor end of tRNA(Tyr). The protein is Tyrosine--tRNA ligase 1, cytoplasmic of Arabidopsis thaliana (Mouse-ear cress).